The sequence spans 396 residues: Pectinesterase (396 aa).

An N-terminal signal peptide occupies residues 1-26 (MQSTTLYLKTAAFLGGCSLFAATALA). Thr174 contributes to the substrate binding site. The active-site Proton donor is the Asp232. Asp259 (nucleophile) is an active-site residue. 2 residues coordinate substrate: Arg324 and Trp326.

Belongs to the pectinesterase family.

It localises to the secreted. The enzyme catalyses [(1-&gt;4)-alpha-D-galacturonosyl methyl ester](n) + n H2O = [(1-&gt;4)-alpha-D-galacturonosyl](n) + n methanol + n H(+). Its pathway is glycan metabolism; pectin degradation; 2-dehydro-3-deoxy-D-gluconate from pectin: step 1/5. In terms of biological role, involved in maceration and soft-rotting of plant tissue. The protein is Pectinesterase (pme) of Ralstonia solanacearum (Pseudomonas solanacearum).